The following is a 455-amino-acid chain: Rho GTPase-activating protein 3 (455 aa).

The segment covering 1–12 (MTNFSRSKSTGT) has biased composition (polar residues). The interval 1 to 68 (MTNFSRSKST…HASRSGNGSG (68 aa)) is disordered. Positions 24–33 (GPDKYENIHN) are enriched in basic and acidic residues. Residues 43–54 (STTSTDYYDAST) show a composition bias toward low complexity. Over residues 55 to 64 (PLSSHASRSG) the composition is skewed to polar residues. Positions 105 to 118 (IGWPTEVKHVSHVT) constitute a CRIB domain. A Rho-GAP domain is found at 153-331 (KSMQCSYDDR…LILMNLKERE (179 aa)). Disordered stretches follow at residues 342 to 366 (KQTS…KPNN) and 432 to 455 (FVSN…SLPW). Over residues 435–446 (NRDEGRKGREAW) the composition is skewed to basic and acidic residues.

In terms of tissue distribution, expressed in differentiating xylem cells.

It is found in the cell membrane. Functionally, acts as a GTPase activator for the Rac-type GTPase by converting it to an inactive GDP-bound state. Involved in secondary wall pattern formation. In association with ROPGEF4, mediates local activation of ARAC10/ROP11 to initiate the distinct pattern of secondary cell walls in xylem cells. The chain is Rho GTPase-activating protein 3 (ROPGAP3) from Arabidopsis thaliana (Mouse-ear cress).